We begin with the raw amino-acid sequence, 429 residues long: Serine--tRNA ligase (429 aa).

Thr-236–Glu-238 provides a ligand contact to L-serine. An ATP-binding site is contributed by Arg-267–Glu-269. Glu-290 contributes to the L-serine binding site. ATP is bound at residue Glu-354–Ser-357. Ser-390 serves as a coordination point for L-serine.

Belongs to the class-II aminoacyl-tRNA synthetase family. Type-1 seryl-tRNA synthetase subfamily. As to quaternary structure, homodimer. The tRNA molecule binds across the dimer.

It localises to the cytoplasm. The catalysed reaction is tRNA(Ser) + L-serine + ATP = L-seryl-tRNA(Ser) + AMP + diphosphate + H(+). It catalyses the reaction tRNA(Sec) + L-serine + ATP = L-seryl-tRNA(Sec) + AMP + diphosphate + H(+). The protein operates within aminoacyl-tRNA biosynthesis; selenocysteinyl-tRNA(Sec) biosynthesis; L-seryl-tRNA(Sec) from L-serine and tRNA(Sec): step 1/1. Its function is as follows. Catalyzes the attachment of serine to tRNA(Ser). Is also able to aminoacylate tRNA(Sec) with serine, to form the misacylated tRNA L-seryl-tRNA(Sec), which will be further converted into selenocysteinyl-tRNA(Sec). This Vesicomyosocius okutanii subsp. Calyptogena okutanii (strain HA) protein is Serine--tRNA ligase.